A 337-amino-acid polypeptide reads, in one-letter code: Phenylalanine--tRNA ligase alpha subunit (337 aa).

E252 provides a ligand contact to Mg(2+).

This sequence belongs to the class-II aminoacyl-tRNA synthetase family. Phe-tRNA synthetase alpha subunit type 1 subfamily. As to quaternary structure, tetramer of two alpha and two beta subunits. The cofactor is Mg(2+).

The protein localises to the cytoplasm. It catalyses the reaction tRNA(Phe) + L-phenylalanine + ATP = L-phenylalanyl-tRNA(Phe) + AMP + diphosphate + H(+). In Francisella tularensis subsp. novicida (strain U112), this protein is Phenylalanine--tRNA ligase alpha subunit.